Reading from the N-terminus, the 245-residue chain is Carbohydrate deacetylase (245 aa).

The Mg(2+) site is built by histidine 59 and histidine 121.

Belongs to the YdjC deacetylase family. As to quaternary structure, homodimer. Mg(2+) is required as a cofactor.

Functionally, probably catalyzes the deacetylation of acetylated carbohydrates an important step in the degradation of oligosaccharides. The polypeptide is Carbohydrate deacetylase (Clostridium beijerinckii (strain ATCC 51743 / NCIMB 8052) (Clostridium acetobutylicum)).